Here is a 193-residue protein sequence, read N- to C-terminus: uncharacterized protein (193 aa).

Positions 1–84 (MTSKCSKWHE…RRSNQRIQLY (84 aa)) are disordered. A compositionally biased stretch (basic residues) spans 43–78 (SSPRRSSPRRSPRRSSPRRSSPRRSSPRRSSPRRSN).

It belongs to the IIV-6 378R family.

This is an uncharacterized protein from Invertebrate iridescent virus 6 (IIV-6).